Reading from the N-terminus, the 491-residue chain is UDP-N-acetylmuramate--L-alanine ligase (491 aa).

126–132 (GTHGKTT) is an ATP binding site.

It belongs to the MurCDEF family.

The protein resides in the cytoplasm. It catalyses the reaction UDP-N-acetyl-alpha-D-muramate + L-alanine + ATP = UDP-N-acetyl-alpha-D-muramoyl-L-alanine + ADP + phosphate + H(+). The protein operates within cell wall biogenesis; peptidoglycan biosynthesis. Functionally, cell wall formation. This Photorhabdus laumondii subsp. laumondii (strain DSM 15139 / CIP 105565 / TT01) (Photorhabdus luminescens subsp. laumondii) protein is UDP-N-acetylmuramate--L-alanine ligase.